Reading from the N-terminus, the 304-residue chain is Oxygen-dependent coproporphyrinogen-III oxidase (304 aa).

Residue serine 94 participates in substrate binding. A divalent metal cation contacts are provided by histidine 98 and histidine 108. Histidine 108 functions as the Proton donor in the catalytic mechanism. Substrate is bound at residue 110–112 (NVR). A divalent metal cation is bound by residues histidine 147 and histidine 177. The interval 242–277 (YVEFNLVYDRGTLFGLQTGGRTESILMSMPPLVRWE) is important for dimerization. 260-262 (GGR) is a substrate binding site.

The protein belongs to the aerobic coproporphyrinogen-III oxidase family. Homodimer. The cofactor is a divalent metal cation.

It is found in the cytoplasm. It catalyses the reaction coproporphyrinogen III + O2 + 2 H(+) = protoporphyrinogen IX + 2 CO2 + 2 H2O. It functions in the pathway porphyrin-containing compound metabolism; protoporphyrin-IX biosynthesis; protoporphyrinogen-IX from coproporphyrinogen-III (O2 route): step 1/1. Functionally, involved in the heme biosynthesis. Catalyzes the aerobic oxidative decarboxylation of propionate groups of rings A and B of coproporphyrinogen-III to yield the vinyl groups in protoporphyrinogen-IX. This Shewanella halifaxensis (strain HAW-EB4) protein is Oxygen-dependent coproporphyrinogen-III oxidase.